The primary structure comprises 537 residues: Chaperonin GroEL 2 (537 aa).

Residues 29–32, 86–90, Gly413, 477–479, and Asp493 contribute to the ATP site; these read TLGP, DGTTT, and NAA.

It belongs to the chaperonin (HSP60) family. Forms a cylinder of 14 subunits composed of two heptameric rings stacked back-to-back. Interacts with the co-chaperonin GroES.

The protein resides in the cytoplasm. It carries out the reaction ATP + H2O + a folded polypeptide = ADP + phosphate + an unfolded polypeptide.. Functionally, together with its co-chaperonin GroES, plays an essential role in assisting protein folding. The GroEL-GroES system forms a nano-cage that allows encapsulation of the non-native substrate proteins and provides a physical environment optimized to promote and accelerate protein folding. This chain is Chaperonin GroEL 2, found in Thermobifida fusca (strain YX).